Here is a 260-residue protein sequence, read N- to C-terminus: Proteasome subunit alpha (260 aa).

This sequence belongs to the peptidase T1A family. In terms of assembly, the 20S proteasome core is composed of 14 alpha and 14 beta subunits that assemble into four stacked heptameric rings, resulting in a barrel-shaped structure. The two inner rings, each composed of seven catalytic beta subunits, are sandwiched by two outer rings, each composed of seven alpha subunits. The catalytic chamber with the active sites is on the inside of the barrel. Has a gated structure, the ends of the cylinder being occluded by the N-termini of the alpha-subunits. Is capped at one or both ends by the proteasome regulatory ATPase, PAN.

The protein localises to the cytoplasm. Its activity is regulated as follows. The formation of the proteasomal ATPase PAN-20S proteasome complex, via the docking of the C-termini of PAN into the intersubunit pockets in the alpha-rings, triggers opening of the gate for substrate entry. Interconversion between the open-gate and close-gate conformations leads to a dynamic regulation of the 20S proteasome proteolysis activity. Component of the proteasome core, a large protease complex with broad specificity involved in protein degradation. The protein is Proteasome subunit alpha of Thermococcus onnurineus (strain NA1).